The following is a 296-amino-acid chain: Bifunctional protein FolD (296 aa).

NADP(+) is bound by residues 169 to 171, T196, and V237; that span reads GRG.

It belongs to the tetrahydrofolate dehydrogenase/cyclohydrolase family. Homodimer.

It carries out the reaction (6R)-5,10-methylene-5,6,7,8-tetrahydrofolate + NADP(+) = (6R)-5,10-methenyltetrahydrofolate + NADPH. The enzyme catalyses (6R)-5,10-methenyltetrahydrofolate + H2O = (6R)-10-formyltetrahydrofolate + H(+). The protein operates within one-carbon metabolism; tetrahydrofolate interconversion. Catalyzes the oxidation of 5,10-methylenetetrahydrofolate to 5,10-methenyltetrahydrofolate and then the hydrolysis of 5,10-methenyltetrahydrofolate to 10-formyltetrahydrofolate. The sequence is that of Bifunctional protein FolD from Kocuria rhizophila (strain ATCC 9341 / DSM 348 / NBRC 103217 / DC2201).